We begin with the raw amino-acid sequence, 430 residues long: Dihydrolipoyllysine-residue acetyltransferase component of pyruvate dehydrogenase complex (430 aa).

A Lipoyl-binding domain is found at 2–77 (AFEFRLPDIG…VVGDVIVKID (76 aa)). Lys43 is subject to N6-lipoyllysine. The disordered stretch occupies residues 80 to 122 (DAEDMQFKGHDDDSSSKEEPAKEEAPAEQAPVATQTEEVDENR). Over residues 84–104 (MQFKGHDDDSSSKEEPAKEEA) the composition is skewed to basic and acidic residues. A Peripheral subunit-binding (PSBD) domain is found at 125–162 (KAMPSVRKYAREKGVNIKAVSGSGKNGRITKEDVDAYL). The disordered stretch occupies residues 164 to 199 (GGAPTASNESAASATSEEVAETPAAPAAVSLEGDFP). Over residues 166-193 (APTASNESAASATSEEVAETPAAPAAVS) the composition is skewed to low complexity. His401 is an active-site residue.

This sequence belongs to the 2-oxoacid dehydrogenase family. As to quaternary structure, forms a 24-polypeptide structural core with octahedral symmetry. Requires (R)-lipoate as cofactor.

It carries out the reaction N(6)-[(R)-dihydrolipoyl]-L-lysyl-[protein] + acetyl-CoA = N(6)-[(R)-S(8)-acetyldihydrolipoyl]-L-lysyl-[protein] + CoA. Functionally, the pyruvate dehydrogenase complex catalyzes the overall conversion of pyruvate to acetyl-CoA and CO(2). It contains multiple copies of three enzymatic components: pyruvate dehydrogenase (E1), dihydrolipoamide acetyltransferase (E2) and lipoamide dehydrogenase (E3). This is Dihydrolipoyllysine-residue acetyltransferase component of pyruvate dehydrogenase complex (pdhC) from Staphylococcus aureus (strain Mu50 / ATCC 700699).